The chain runs to 311 residues: Aspartate carbamoyltransferase catalytic subunit (311 aa).

Carbamoyl phosphate contacts are provided by Arg55 and Thr56. Lys85 lines the L-aspartate pocket. Carbamoyl phosphate-binding residues include Arg106, His135, and Gln138. 2 residues coordinate L-aspartate: Arg168 and Arg230. Residues Leu268 and Pro269 each contribute to the carbamoyl phosphate site.

It belongs to the aspartate/ornithine carbamoyltransferase superfamily. ATCase family. As to quaternary structure, heterododecamer (2C3:3R2) of six catalytic PyrB chains organized as two trimers (C3), and six regulatory PyrI chains organized as three dimers (R2).

The catalysed reaction is carbamoyl phosphate + L-aspartate = N-carbamoyl-L-aspartate + phosphate + H(+). The protein operates within pyrimidine metabolism; UMP biosynthesis via de novo pathway; (S)-dihydroorotate from bicarbonate: step 2/3. Its function is as follows. Catalyzes the condensation of carbamoyl phosphate and aspartate to form carbamoyl aspartate and inorganic phosphate, the committed step in the de novo pyrimidine nucleotide biosynthesis pathway. The protein is Aspartate carbamoyltransferase catalytic subunit of Pectobacterium carotovorum subsp. carotovorum (strain PC1).